The following is a 207-amino-acid chain: Thiamine-phosphate synthase (207 aa).

Residues 36 to 40 (QLRIK) and Asp-68 each bind 4-amino-2-methyl-5-(diphosphooxymethyl)pyrimidine. The Mg(2+) site is built by Asp-69 and Asp-88. Ser-106 contacts 4-amino-2-methyl-5-(diphosphooxymethyl)pyrimidine. A 2-[(2R,5Z)-2-carboxy-4-methylthiazol-5(2H)-ylidene]ethyl phosphate-binding site is contributed by 132 to 134 (TQT). Residue Lys-135 participates in 4-amino-2-methyl-5-(diphosphooxymethyl)pyrimidine binding. Residues Gly-162 and 182–183 (VS) each bind 2-[(2R,5Z)-2-carboxy-4-methylthiazol-5(2H)-ylidene]ethyl phosphate.

This sequence belongs to the thiamine-phosphate synthase family. Mg(2+) is required as a cofactor.

The catalysed reaction is 2-[(2R,5Z)-2-carboxy-4-methylthiazol-5(2H)-ylidene]ethyl phosphate + 4-amino-2-methyl-5-(diphosphooxymethyl)pyrimidine + 2 H(+) = thiamine phosphate + CO2 + diphosphate. It carries out the reaction 2-(2-carboxy-4-methylthiazol-5-yl)ethyl phosphate + 4-amino-2-methyl-5-(diphosphooxymethyl)pyrimidine + 2 H(+) = thiamine phosphate + CO2 + diphosphate. The enzyme catalyses 4-methyl-5-(2-phosphooxyethyl)-thiazole + 4-amino-2-methyl-5-(diphosphooxymethyl)pyrimidine + H(+) = thiamine phosphate + diphosphate. The protein operates within cofactor biosynthesis; thiamine diphosphate biosynthesis; thiamine phosphate from 4-amino-2-methyl-5-diphosphomethylpyrimidine and 4-methyl-5-(2-phosphoethyl)-thiazole: step 1/1. Condenses 4-methyl-5-(beta-hydroxyethyl)thiazole monophosphate (THZ-P) and 2-methyl-4-amino-5-hydroxymethyl pyrimidine pyrophosphate (HMP-PP) to form thiamine monophosphate (TMP). The sequence is that of Thiamine-phosphate synthase from Pyrococcus horikoshii (strain ATCC 700860 / DSM 12428 / JCM 9974 / NBRC 100139 / OT-3).